The chain runs to 217 residues: Octanoyltransferase (217 aa).

The region spanning 34–216 is the BPL/LPL catalytic domain; the sequence is SETRDELWLL…AASRASRHDR (183 aa). Residues 73–80, 140–142, and 153–155 contribute to the substrate site; these read RGGQVTWH, ALG, and GLS. The Acyl-thioester intermediate role is filled by C171.

This sequence belongs to the LipB family.

Its subcellular location is the cytoplasm. It catalyses the reaction octanoyl-[ACP] + L-lysyl-[protein] = N(6)-octanoyl-L-lysyl-[protein] + holo-[ACP] + H(+). It functions in the pathway protein modification; protein lipoylation via endogenous pathway; protein N(6)-(lipoyl)lysine from octanoyl-[acyl-carrier-protein]: step 1/2. Catalyzes the transfer of endogenously produced octanoic acid from octanoyl-acyl-carrier-protein onto the lipoyl domains of lipoate-dependent enzymes. Lipoyl-ACP can also act as a substrate although octanoyl-ACP is likely to be the physiological substrate. The chain is Octanoyltransferase from Halorhodospira halophila (strain DSM 244 / SL1) (Ectothiorhodospira halophila (strain DSM 244 / SL1)).